Reading from the N-terminus, the 117-residue chain is Large ribosomal subunit protein uL18 (117 aa).

This sequence belongs to the universal ribosomal protein uL18 family. In terms of assembly, part of the 50S ribosomal subunit; part of the 5S rRNA/L5/L18/L25 subcomplex. Contacts the 5S and 23S rRNAs.

Functionally, this is one of the proteins that bind and probably mediate the attachment of the 5S RNA into the large ribosomal subunit, where it forms part of the central protuberance. This is Large ribosomal subunit protein uL18 from Chromobacterium violaceum (strain ATCC 12472 / DSM 30191 / JCM 1249 / CCUG 213 / NBRC 12614 / NCIMB 9131 / NCTC 9757 / MK).